The chain runs to 285 residues: 2-dehydro-3-deoxyphosphooctonate aldolase (285 aa).

It belongs to the KdsA family.

The protein resides in the cytoplasm. The catalysed reaction is D-arabinose 5-phosphate + phosphoenolpyruvate + H2O = 3-deoxy-alpha-D-manno-2-octulosonate-8-phosphate + phosphate. The protein operates within carbohydrate biosynthesis; 3-deoxy-D-manno-octulosonate biosynthesis; 3-deoxy-D-manno-octulosonate from D-ribulose 5-phosphate: step 2/3. It functions in the pathway bacterial outer membrane biogenesis; lipopolysaccharide biosynthesis. The polypeptide is 2-dehydro-3-deoxyphosphooctonate aldolase (Methylibium petroleiphilum (strain ATCC BAA-1232 / LMG 22953 / PM1)).